The chain runs to 160 residues: MSILKKPDLSDPILRQKLAKGMGHNYYGEPAWPNDLLYMFPVVILGTIACLTGLAVLDPALVGEPADPFATPLEILPEWYLYPVFQILRIVPNKLLGIVLQSMIPLGLIAIPFIESVNKFQNPFRRPIATAVFLFGTVFTLYLGIGAALPIDKSLTLGLF.

3 consecutive transmembrane segments (helical) span residues 36–56, 95–115, and 131–151; these read LLYM…GLAV, LLGI…PFIE, and AVFL…ALPI.

This sequence belongs to the cytochrome b family. PetD subfamily. The 4 large subunits of the cytochrome b6-f complex are cytochrome b6, subunit IV (17 kDa polypeptide, PetD), cytochrome f and the Rieske protein, while the 4 small subunits are PetG, PetL, PetM and PetN. The complex functions as a dimer.

The protein resides in the cellular thylakoid membrane. Its function is as follows. Component of the cytochrome b6-f complex, which mediates electron transfer between photosystem II (PSII) and photosystem I (PSI), cyclic electron flow around PSI, and state transitions. This chain is Cytochrome b6-f complex subunit 4, found in Synechococcus elongatus (strain ATCC 33912 / PCC 7942 / FACHB-805) (Anacystis nidulans R2).